We begin with the raw amino-acid sequence, 95 residues long: Aspartyl/glutamyl-tRNA(Asn/Gln) amidotransferase subunit C (95 aa).

This sequence belongs to the GatC family. As to quaternary structure, heterotrimer of A, B and C subunits.

The catalysed reaction is L-glutamyl-tRNA(Gln) + L-glutamine + ATP + H2O = L-glutaminyl-tRNA(Gln) + L-glutamate + ADP + phosphate + H(+). The enzyme catalyses L-aspartyl-tRNA(Asn) + L-glutamine + ATP + H2O = L-asparaginyl-tRNA(Asn) + L-glutamate + ADP + phosphate + 2 H(+). In terms of biological role, allows the formation of correctly charged Asn-tRNA(Asn) or Gln-tRNA(Gln) through the transamidation of misacylated Asp-tRNA(Asn) or Glu-tRNA(Gln) in organisms which lack either or both of asparaginyl-tRNA or glutaminyl-tRNA synthetases. The reaction takes place in the presence of glutamine and ATP through an activated phospho-Asp-tRNA(Asn) or phospho-Glu-tRNA(Gln). This is Aspartyl/glutamyl-tRNA(Asn/Gln) amidotransferase subunit C from Syntrophus aciditrophicus (strain SB).